A 394-amino-acid polypeptide reads, in one-letter code: GTPase Obg (394 aa).

Positions 4–162 (SNFVDYVKIY…LMVILELKLL (159 aa)) constitute an Obg domain. Residues 163 to 329 (ADVGLVGFPN…LKDILWTELN (167 aa)) enclose the OBG-type G domain. Residues 169-176 (GFPNAGKS), 194-198 (FTTLE), 216-219 (DIPG), 283-286 (TKSD), and 310-312 (SSV) each bind GTP. 2 residues coordinate Mg(2+): Ser176 and Thr196. Residues 358–394 (KDMGEDEDFEYEYEEDADDDFDYEYEDENWDEEEEKK) are disordered. Positions 361 to 394 (GEDEDFEYEYEEDADDDFDYEYEDENWDEEEEKK) are enriched in acidic residues.

The protein belongs to the TRAFAC class OBG-HflX-like GTPase superfamily. OBG GTPase family. As to quaternary structure, monomer. Mg(2+) is required as a cofactor.

It is found in the cytoplasm. An essential GTPase which binds GTP, GDP and possibly (p)ppGpp with moderate affinity, with high nucleotide exchange rates and a fairly low GTP hydrolysis rate. Plays a role in control of the cell cycle, stress response, ribosome biogenesis and in those bacteria that undergo differentiation, in morphogenesis control. This chain is GTPase Obg, found in Phocaeicola vulgatus (strain ATCC 8482 / DSM 1447 / JCM 5826 / CCUG 4940 / NBRC 14291 / NCTC 11154) (Bacteroides vulgatus).